We begin with the raw amino-acid sequence, 493 residues long: Probable plastidic glucose transporter 2 (493 aa).

Residues 1 to 14 (MLGLQRETSSMYKR) show a composition bias toward polar residues. Residues 1–24 (MLGLQRETSSMYKRTSSRDYSPMI) are disordered. The next 12 helical transmembrane spans lie at 52 to 72 (LPHV…LGVV), 94 to 114 (LVVS…GGVA), 128 to 148 (LPMI…VMLL), 151 to 171 (FLVG…VTEV), 182 to 202 (SFIQ…GIPV), 211 to 231 (VCFW…FLCA), 293 to 313 (VVFI…NAVF), 329 to 349 (LGNI…MVLM), 356 to 376 (LLLL…VGAT), 392 to 412 (GTLV…GLLL), 424 to 444 (AMAF…LLFL), and 450 to 470 (LGPR…VMFV).

Belongs to the major facilitator superfamily. Sugar transporter (TC 2.A.1.1) family.

The protein resides in the plastid. The protein localises to the chloroplast membrane. Functionally, may be involved in the efflux of glucose towards the cytosol. The protein is Probable plastidic glucose transporter 2 of Arabidopsis thaliana (Mouse-ear cress).